The chain runs to 425 residues: Trigger factor (425 aa).

One can recognise a PPIase FKBP-type domain in the interval 158-231; that stretch reads GDLVRISMEV…VQEVYRRTLP (74 aa).

Belongs to the FKBP-type PPIase family. Tig subfamily.

It is found in the cytoplasm. The catalysed reaction is [protein]-peptidylproline (omega=180) = [protein]-peptidylproline (omega=0). Its function is as follows. Involved in protein export. Acts as a chaperone by maintaining the newly synthesized protein in an open conformation. Functions as a peptidyl-prolyl cis-trans isomerase. The polypeptide is Trigger factor (Thermotoga neapolitana (strain ATCC 49049 / DSM 4359 / NBRC 107923 / NS-E)).